Here is a 312-residue protein sequence, read N- to C-terminus: Ribosomal RNA small subunit methyltransferase H (312 aa).

Residues 37–39 (GGH), Asp-57, Phe-83, and Asp-104 each bind S-adenosyl-L-methionine.

Belongs to the methyltransferase superfamily. RsmH family.

It is found in the cytoplasm. The catalysed reaction is cytidine(1402) in 16S rRNA + S-adenosyl-L-methionine = N(4)-methylcytidine(1402) in 16S rRNA + S-adenosyl-L-homocysteine + H(+). Its function is as follows. Specifically methylates the N4 position of cytidine in position 1402 (C1402) of 16S rRNA. In Malacoplasma penetrans (strain HF-2) (Mycoplasma penetrans), this protein is Ribosomal RNA small subunit methyltransferase H.